Consider the following 730-residue polypeptide: Elongation factor 2 (730 aa).

In terms of domain architecture, tr-type G spans 19–260 (EKIRNIGIVA…MVIRFLPNPL (242 aa)). Residues 28–35 (AHIDHGKT), 94–98 (DTPGH), and 148–151 (NKVD) each bind GTP. Histidine 596 bears the Diphthamide mark.

This sequence belongs to the TRAFAC class translation factor GTPase superfamily. Classic translation factor GTPase family. EF-G/EF-2 subfamily.

Its subcellular location is the cytoplasm. Catalyzes the GTP-dependent ribosomal translocation step during translation elongation. During this step, the ribosome changes from the pre-translocational (PRE) to the post-translocational (POST) state as the newly formed A-site-bound peptidyl-tRNA and P-site-bound deacylated tRNA move to the P and E sites, respectively. Catalyzes the coordinated movement of the two tRNA molecules, the mRNA and conformational changes in the ribosome. This is Elongation factor 2 (fusA) from Methanosarcina thermophila.